Reading from the N-terminus, the 152-residue chain is Protein-export protein SecB (152 aa).

This sequence belongs to the SecB family. In terms of assembly, homotetramer, a dimer of dimers. One homotetramer interacts with 1 SecA dimer.

Its subcellular location is the cytoplasm. Functionally, one of the proteins required for the normal export of preproteins out of the cell cytoplasm. It is a molecular chaperone that binds to a subset of precursor proteins, maintaining them in a translocation-competent state. It also specifically binds to its receptor SecA. In Rickettsia peacockii (strain Rustic), this protein is Protein-export protein SecB.